A 345-amino-acid chain; its full sequence is tRNA N6-adenosine threonylcarbamoyltransferase (345 aa).

Fe cation is bound by residues H113 and H117. Residues 142–146 (AISGG), D175, G188, D192, and N282 contribute to the substrate site. D310 serves as a coordination point for Fe cation.

The protein belongs to the KAE1 / TsaD family. It depends on Fe(2+) as a cofactor.

It is found in the cytoplasm. It catalyses the reaction L-threonylcarbamoyladenylate + adenosine(37) in tRNA = N(6)-L-threonylcarbamoyladenosine(37) in tRNA + AMP + H(+). Functionally, required for the formation of a threonylcarbamoyl group on adenosine at position 37 (t(6)A37) in tRNAs that read codons beginning with adenine. Is involved in the transfer of the threonylcarbamoyl moiety of threonylcarbamoyl-AMP (TC-AMP) to the N6 group of A37, together with TsaE and TsaB. TsaD likely plays a direct catalytic role in this reaction. In Bdellovibrio bacteriovorus (strain ATCC 15356 / DSM 50701 / NCIMB 9529 / HD100), this protein is tRNA N6-adenosine threonylcarbamoyltransferase.